The primary structure comprises 579 residues: Putative laccase-9 (579 aa).

The first 27 residues, 1 to 27 (MGTAKLPALLWLLAGVVLALAVNPAHG), serve as a signal peptide directing secretion. 2 consecutive Plastocyanin-like domains span residues 36–152 (FITE…PKRG) and 162–319 (KEIP…YTDS). 2 N-linked (GlcNAc...) asparagine glycosylation sites follow: Asn-41 and Asn-82. Cu cation is bound by residues His-86 and His-88. The N-linked (GlcNAc...) asparagine glycan is linked to Asn-114. Cu cation-binding residues include His-131 and His-133. N-linked (GlcNAc...) asparagine glycans are attached at residues Asn-307, Asn-405, and Asn-446. The region spanning 436-563 (PTAFVDPPVN…DTVFIVKDGK (128 aa)) is the Plastocyanin-like 3 domain. Residues His-480, His-483, and His-485 each contribute to the Cu cation site. Residue Asn-496 is glycosylated (N-linked (GlcNAc...) asparagine). Cu cation is bound by residues His-542, Cys-543, His-544, His-548, and Met-553.

The protein belongs to the multicopper oxidase family. It depends on Cu cation as a cofactor.

The protein localises to the secreted. It localises to the extracellular space. The protein resides in the apoplast. The catalysed reaction is 4 hydroquinone + O2 = 4 benzosemiquinone + 2 H2O. Its function is as follows. Lignin degradation and detoxification of lignin-derived products. The protein is Putative laccase-9 (LAC9) of Oryza sativa subsp. japonica (Rice).